We begin with the raw amino-acid sequence, 669 residues long: Dymeclin (669 aa).

Glycine 2 carries N-myristoyl glycine lipidation.

This sequence belongs to the dymeclin family. Interacts with GOLM1 and PPIB. Myristoylated in vitro; myristoylation is not essential for protein targeting to Golgi compartment.

It localises to the cytoplasm. The protein resides in the golgi apparatus. The protein localises to the membrane. In terms of biological role, necessary for correct organization of Golgi apparatus. Involved in bone development. This chain is Dymeclin (DYM), found in Pongo abelii (Sumatran orangutan).